Consider the following 952-residue polypeptide: Lysosomal alpha-glucosidase (952 aa).

The first 27 residues, 1 to 27, serve as a signal peptide directing secretion; the sequence is MRVRHPPCSRRLLAICALVSLATAALL. Residues 28–69 constitute a propeptide that is removed on maturation; that stretch reads GHILLHDFLLVPRELSGSSPVLEETHPAHQQGASRPGPRDAQ. The interval 47-80 is disordered; the sequence is PVLEETHPAHQQGASRPGPRDAQAHLGRPRAVPT. The 52-residue stretch at 80 to 131 folds into the P-type domain; it reads TQCDVPPNSRFDCAPDKAITREQCDARGCCYIPAKQGLRGAQMGQPWCFFPP. Disulfide bonds link Cys82-Cys109, Cys92-Cys108, and Cys103-Cys127. Residues Asn140, Asn233, and Asn390 are each glycosylated (N-linked (GlcNAc...) asparagine). Substrate is bound at residue Asp404. N-linked (GlcNAc...) asparagine glycosylation is present at Asn470. Asp518 acts as the Nucleophile in catalysis. Glu521 is a catalytic residue. A disulfide bridge connects residues Cys533 and Cys558. 2 residues coordinate substrate: Arg600 and Asp616. Cys647 and Cys658 are joined by a disulfide. A glycan (N-linked (GlcNAc...) asparagine) is linked at Asn652. Position 674 (His674) interacts with substrate. Asn882 and Asn925 each carry an N-linked (GlcNAc...) asparagine glycan.

The protein belongs to the glycosyl hydrolase 31 family.

The protein resides in the lysosome. It localises to the lysosome membrane. The enzyme catalyses Hydrolysis of terminal, non-reducing (1-&gt;4)-linked alpha-D-glucose residues with release of alpha-D-glucose.. Essential for the degradation of glycogen in lysosomes. Has highest activity on alpha-1,4-linked glycosidic linkages, but can also hydrolyze alpha-1,6-linked glucans. In Pongo abelii (Sumatran orangutan), this protein is Lysosomal alpha-glucosidase (GAA).